A 1040-amino-acid polypeptide reads, in one-letter code: Multidrug resistance protein MdtB (1040 aa).

A run of 12 helical transmembrane segments spans residues F16–I36, L347–A367, I369–L389, L396–I416, I440–F460, F472–P492, W537–I557, L863–I883, F888–A908, I911–V931, I968–V988, and I998–I1018.

It belongs to the resistance-nodulation-cell division (RND) (TC 2.A.6) family. MdtB subfamily. In terms of assembly, part of a tripartite efflux system composed of MdtA, MdtB and MdtC. MdtB forms a heteromultimer with MdtC.

It localises to the cell inner membrane. Functionally, the MdtABC tripartite complex confers resistance against novobiocin and deoxycholate. This is Multidrug resistance protein MdtB from Escherichia coli O7:K1 (strain IAI39 / ExPEC).